The sequence spans 449 residues: Asparagine--tRNA ligase (449 aa).

Belongs to the class-II aminoacyl-tRNA synthetase family. Homodimer.

The protein resides in the cytoplasm. It carries out the reaction tRNA(Asn) + L-asparagine + ATP = L-asparaginyl-tRNA(Asn) + AMP + diphosphate + H(+). This is Asparagine--tRNA ligase from Mesomycoplasma hyopneumoniae (strain 7448) (Mycoplasma hyopneumoniae).